We begin with the raw amino-acid sequence, 129 residues long: V-type proton ATPase subunit F 2 (129 aa).

The protein belongs to the V-ATPase F subunit family. In terms of assembly, V-ATPase is a heteromultimeric enzyme made up of two complexes: the ATP-hydrolytic V1 complex and the proton translocation V0 complex. The V1 complex consists of three catalytic AB heterodimers that form a heterohexamer, three peripheral stalks each consisting of EG heterodimers, one central rotor including subunits D and F, and the regulatory subunits C and H. The proton translocation complex V0 consists of the proton transport subunit a, a ring of proteolipid subunits c9c'', rotary subunit d, subunits e and f, and the accessory subunits VhaAC45 and ATP6AP2.

Functionally, subunit of the V1 complex of vacuolar(H+)-ATPase (V-ATPase), a multisubunit enzyme composed of a peripheral complex (V1) that hydrolyzes ATP and a membrane integral complex (V0) that translocates protons. V-ATPase is responsible for acidifying and maintaining the pH of intracellular compartments and in some cell types, is targeted to the plasma membrane, where it is responsible for acidifying the extracellular environment. This chain is V-type proton ATPase subunit F 2 (Vha14-2), found in Drosophila melanogaster (Fruit fly).